A 314-amino-acid chain; its full sequence is Olfactory receptor-like protein I9 (314 aa).

At 1 to 25 (MTRRNQTAISQFFLLGLPFPPEYQH) the chain is on the extracellular side. An N-linked (GlcNAc...) asparagine glycan is attached at asparagine 5. The helical transmembrane segment at 26-50 (LFYALFLAMYLTTLLGNLIIIILIL) threads the bilayer. The Cytoplasmic portion of the chain corresponds to 51–57 (LDSHLHT). A helical membrane pass occupies residues 58-79 (PMYLFLSNLSFADLCFSSVTMP). Over 80–100 (KLLQNMQSQVPSIPYAGCLAQ) the chain is Extracellular. An intrachain disulfide couples cysteine 97 to cysteine 189. Residues 101–120 (IYFFLFFGDLGNFLLVAMAY) traverse the membrane as a helical segment. At 121 to 139 (DRYVAICFPLHYMSIMSPK) the chain is on the cytoplasmic side. A helical transmembrane segment spans residues 140–158 (LCVSLVVLSWVLTTFHAML). Residues 159 to 196 (HTLLMARLSFCEDSVIPHYFCDMSTLLKVACSDTHDNE) are Extracellular-facing. Residues 197-219 (LAIFILGGPIVVLPFLLIIVSYA) traverse the membrane as a helical segment. Residues 220 to 236 (RIVSSIFKVPSSQSIHK) lie on the Cytoplasmic side of the membrane. The chain crosses the membrane as a helical span at residues 237-260 (AFSTCGSHLSVVSLFYGTVIGLYL). At 261–272 (CPSANNSTVKET) the chain is on the extracellular side. Residues 273-292 (VMSLMYTMVTPMLNPFIYSL) form a helical membrane-spanning segment. The Cytoplasmic portion of the chain corresponds to 293–314 (RNRDIKDALEKIMCKKQIPSFL).

This sequence belongs to the G-protein coupled receptor 1 family. In terms of tissue distribution, olfactory epithelium.

It localises to the cell membrane. Its function is as follows. Odorant receptor. The polypeptide is Olfactory receptor-like protein I9 (Rattus norvegicus (Rat)).